A 480-amino-acid chain; its full sequence is F-box only protein 3 (480 aa).

Residues 10–56 (LLTLESLPTDPLLLILSFVDYRDLINCCYVSRRLSQLSTHDPLWRRH) form the F-box domain. The ApaG domain maps to 278–408 (VATTGDITVS…FHMACPTFRV (131 aa)). The span at 419 to 458 (EYEEMEEEAEEEEEEENDDSADMDESDESDADENESDEGE) shows a compositional bias: acidic residues. Positions 419-463 (EYEEMEEEAEEEEEEENDDSADMDESDESDADENESDEGEGEARR) are disordered.

In terms of assembly, part of a SCF (SKP1-cullin-F-box) protein ligase complex SCF(FBXO3) consisting of FBXO3, SKP1, CUL1 and RBX1. Interacts with PML, interaction is direct and takes place either alone or within the SCF complex.

The protein localises to the nucleus. It participates in protein modification; protein ubiquitination. In terms of biological role, substrate recognition component of the SCF (SKP1-CUL1-F-box protein)-type E3 ubiquitin ligase complex, SCF(FBXO3), which mediates the ubiquitination and subsequent proteasomal degradation of target proteins. Mediates the ubiquitination of HIPK2 and probably that of EP300, leading to rapid degradation by the proteasome. In the presence of PML, HIPK2 ubiquitination still occurs, but degradation is prevented. PML, HIPK2 and FBXO3 may act synergically to activate p53/TP53-dependent transactivation. The SCF(FBXO3) also acts as a regulator of inflammation by mediating ubiquitination and degradation of FBXL2: specifically recognizes FBXL2 phosphorylated at 'Thr-404' and promotes its ubiquitination. The chain is F-box only protein 3 (Fbxo3) from Mus musculus (Mouse).